We begin with the raw amino-acid sequence, 171 residues long: Adenine phosphoribosyltransferase (171 aa).

This sequence belongs to the purine/pyrimidine phosphoribosyltransferase family. Homodimer.

The protein resides in the cytoplasm. The enzyme catalyses AMP + diphosphate = 5-phospho-alpha-D-ribose 1-diphosphate + adenine. The protein operates within purine metabolism; AMP biosynthesis via salvage pathway; AMP from adenine: step 1/1. Catalyzes a salvage reaction resulting in the formation of AMP, that is energically less costly than de novo synthesis. In Mesomycoplasma hyopneumoniae (strain 232) (Mycoplasma hyopneumoniae), this protein is Adenine phosphoribosyltransferase.